The following is a 314-amino-acid chain: Homoserine kinase (314 aa).

P95–A105 is a binding site for ATP.

It belongs to the GHMP kinase family. Homoserine kinase subfamily.

It localises to the cytoplasm. It catalyses the reaction L-homoserine + ATP = O-phospho-L-homoserine + ADP + H(+). It functions in the pathway amino-acid biosynthesis; L-threonine biosynthesis; L-threonine from L-aspartate: step 4/5. Its function is as follows. Catalyzes the ATP-dependent phosphorylation of L-homoserine to L-homoserine phosphate. The protein is Homoserine kinase of Mycolicibacterium vanbaalenii (strain DSM 7251 / JCM 13017 / BCRC 16820 / KCTC 9966 / NRRL B-24157 / PYR-1) (Mycobacterium vanbaalenii).